The primary structure comprises 285 residues: 4-diphosphocytidyl-2-C-methyl-D-erythritol kinase (285 aa).

Lys9 is an active-site residue. 89-99 (PLGAGLGGGSS) provides a ligand contact to ATP. Asp131 is a catalytic residue.

The protein belongs to the GHMP kinase family. IspE subfamily.

The catalysed reaction is 4-CDP-2-C-methyl-D-erythritol + ATP = 4-CDP-2-C-methyl-D-erythritol 2-phosphate + ADP + H(+). The protein operates within isoprenoid biosynthesis; isopentenyl diphosphate biosynthesis via DXP pathway; isopentenyl diphosphate from 1-deoxy-D-xylulose 5-phosphate: step 3/6. Catalyzes the phosphorylation of the position 2 hydroxy group of 4-diphosphocytidyl-2C-methyl-D-erythritol. This is 4-diphosphocytidyl-2-C-methyl-D-erythritol kinase from Thermodesulfovibrio yellowstonii (strain ATCC 51303 / DSM 11347 / YP87).